A 167-amino-acid polypeptide reads, in one-letter code: ATP synthase subunit delta, mitochondrial (167 aa).

Residues 1-28 (MFRLSNYMLRKSQFPQGLVRAPFGIRGY) constitute a mitochondrion transit peptide.

This sequence belongs to the ATPase epsilon chain family. In terms of assembly, F-type ATPases have 2 components, CF(1) - the catalytic core - and CF(0) - the membrane proton channel. CF(1) has five subunits: alpha(3), beta(3), gamma(1), delta(1), epsilon(1). CF(0) has three main subunits: a, b and c.

The protein resides in the mitochondrion. The protein localises to the mitochondrion inner membrane. In terms of biological role, mitochondrial membrane ATP synthase (F(1)F(0) ATP synthase or Complex V) produces ATP from ADP in the presence of a proton gradient across the membrane which is generated by electron transport complexes of the respiratory chain. F-type ATPases consist of two structural domains, F(1) - containing the extramembraneous catalytic core, and F(0) - containing the membrane proton channel, linked together by a central stalk and a peripheral stalk. During catalysis, ATP turnover in the catalytic domain of F(1) is coupled via a rotary mechanism of the central stalk subunits to proton translocation. Part of the complex F(1) domain and of the central stalk which is part of the complex rotary element. Rotation of the central stalk against the surrounding alpha(3)beta(3) subunits leads to hydrolysis of ATP in three separate catalytic sites on the beta subunits. In Schizosaccharomyces pombe (strain 972 / ATCC 24843) (Fission yeast), this protein is ATP synthase subunit delta, mitochondrial (atp16).